We begin with the raw amino-acid sequence, 343 residues long: Mas-related G-protein coupled receptor member F (343 aa).

Residues 1–44 (MAGNCSWEAHSTNQNKMCPGMSEALELYSRGFLTIEQIATLPPP) are Extracellular-facing. N-linked (GlcNAc...) asparagine glycosylation is present at Asn4. The chain crosses the membrane as a helical span at residues 45–66 (AVTNYIFLLLCLCGLVGNGLVL). Topologically, residues 67–82 (WFFGFSIKRTPFSIYF) are cytoplasmic. Residues 83 to 104 (LHLASADGIYLFSKAVIALLNM) form a helical membrane-spanning segment. At 105 to 123 (GTFLGSFPDYVRRVSRIVG) the chain is on the extracellular side. A helical transmembrane segment spans residues 124 to 144 (LCTFFAGVSLLPAISIERCVS). Residues 145-160 (VIFPMWYWRRRPKRLS) are Cytoplasmic-facing. Residues 161–181 (AGVCALLWLLSFLVTSIHNYF) form a helical membrane-spanning segment. Over 182–198 (CMFLGHEASGTACLNMD) the chain is Extracellular. Residues 199–220 (ISLGILLFFLFCPLMVLPCLAL) form a helical membrane-spanning segment. Residues 221-241 (ILHVECRARRRQRSAKLNHVV) are Cytoplasmic-facing. A helical transmembrane segment spans residues 242-263 (LAIVSVFLVSSIYLGIDWFLFW). Residues 264–273 (VFQIPAPFPE) are Extracellular-facing. A helical transmembrane segment spans residues 274–294 (YVTDLCICINSSAKPIVYFLA). The Cytoplasmic portion of the chain corresponds to 295–343 (GRDKSQRLWEPLRVVFQRALRDGAEPGDAASSTPNTVTMEMQCPSGNAS). The tract at residues 318–343 (AEPGDAASSTPNTVTMEMQCPSGNAS) is disordered. Residues 324–343 (ASSTPNTVTMEMQCPSGNAS) show a composition bias toward polar residues.

The protein belongs to the G-protein coupled receptor 1 family. Mas subfamily. In terms of tissue distribution, gut, vas deferens, uterus and aorta; barely detectable in liver, kidney, lung, and salivary gland. In the brain, markedly abundant in the cerebellum.

The protein localises to the cell membrane. In terms of biological role, orphan receptor. May bind to a neuropeptide and may regulate nociceptor function and/or development, including the sensation or modulation of pain. This chain is Mas-related G-protein coupled receptor member F (Mrgprf), found in Rattus norvegicus (Rat).